We begin with the raw amino-acid sequence, 522 residues long: DEP domain-containing protein 7 (522 aa).

The region spanning 46 to 138 (LYTQVEVKKR…SSCSLYRFLN (93 aa)) is the DEP domain.

The protein belongs to the DEPDC7 family.

The sequence is that of DEP domain-containing protein 7 (depdc7) from Xenopus laevis (African clawed frog).